We begin with the raw amino-acid sequence, 2290 residues long: MTLSTFNRVWCKVMLQRYMGAWLDNNLSVDQLSLELANGCLELDNLDINTKAVSNGFLQCNIPLKLIDGYLGKIKIEIPWLSLMTDPTRMCIEDLQLTFRGAEVMKINDIETLTSMIESVLMGLSTDDMARSVYEEVSKENNVASELLGPDDTADSFSGFIDAVYSRFCLKIKHLTLRFETDPKNRSTMATALEIRVETITFMDEQMRSCEMDHTNATDLVTTQPHGVVSTTNLRKNLTFSGVTFHTDVFSQINNDGMGDEENVLITSMHIRREKAKQMSPTKSVQNSLHPEMFQSAMSDMDAFHSCYDKLTQDYCSPDQLETLRTAPAEPELFSAPIQCAEVVGDISCVFRIKNGANDVNYADVDESKVETDVFIKGINVFATPSQIEIVNRFFSSIVTPKELVVHEQGKPMSKEDYENMTKNMEPNQSNEPPMAGASFGGNWNVGEVFREFDDLKSIKEKEKSEKEKFKSLKASGNIKEEFTVNTHIGTVLMYIPHCDYMSSDYAQQHGGYANVLNYLKKESESFFKSIQGYSFMSKHGLANIRQQSDSFYPKDHLRIVGGSLGITSSCKRVGNVDSFLCRVVATHFDMLEYLTPESAPENSTPIRIGLLDYSEQENLESDPNFKMVLSTSSEQKGLTKVDILLGAVKTELDFSIIDRISNLIACRPFFDEALTNYGNRNTVPQLKDDLYSDVLIAEDDVKSKTLVNLKCSNWQVDLRIPKADLRDPTGSRLPFSQRHVHNEFLRLGIKEIDVSIPIEKSVTLIEILCTEMIGDFCGEGLNIPKQQQRILHASKNGFDKINLKLTLCSDAKKLPGCGRKTSTSGIPDSMMKSVSADIMMAHPKKEGPFSKVPRSYCSHDGEETEEIIQAGTRKEILDFQEECQNFASTFMLFTVPVLKLHIPEKNFLEILYNRLVNDLALFQPAAPAFRNNQSTNSNVQPLESFQECVSPKNYAESEHSDLDDDVATLHESIESLNFDRDIPHTFVMTLNANKCTVLCNTAIKEAEKQPESSQVSLDLEKVHIGTTAGYHGDINHTYFHFTSSKAAAGSIDSPRAPRIPNLISAKDFGKWTKDCNQLEHVPITDELSSGSTEDAFAVALHMHFRPDVNMKDVLLGIALRNSQLQAKPFRHWGAFWITQLADLFTLQDYAIPGYELPSVSTDLHICFENAIIGYDHAWVNPNSKLKLRATLGQCNLASSIVSDMNISKTLCIFESCRLYMSNDLTKDAVRFEGYGTQKVSPKKFIPFLDLGSVQLDILFAVGDETGLRTNPTFEIRCQNDIINAWACADSLATFMKTVMEYTSHEQIPIKTPEEESQELMKSTKTDDINKSVAGESVWSDASTGSKHIQKMTVGANLPDDVEKRIQAMIQEAVNENDERDGIAIGEDAVREFATIQPKHDANETNESFEHVASRNFSVTDDEFCMVDDNIFGSGITIQPGESRTRPMPAKQLPEEPLINGSEFFQTIEDSGSDALYQTMSGQINPVLRYFLKDVTVRLSLYAGNDLSTSPSPIKTYCTEEYRNGFGPEQKIEQNSTGGPNRDHSAFVVFELSKITYLKQIFDKTAPMLSTTLFQVNDIVIKDCVRASDIKEMLYQYSVTNQPRRATAPIVTVRMSETHSKEGKMRVSMLPIKINVDQDTLEFLTDFFEETSKLLDLPKNQMSMPLIQRPVIEVPADIGSKKTTPKTSVSSSEGDIARMYPSIPSPSLTLEPLRPSPVQPPTPLGDLTYLEKISSNHQSPVKRPIIDAPLTASAVSIGKIFERDAHSDEDEEEIIDPIQMAAALEIRELNEELGRIEQLEKKKTDDLFKQSYSSSSSETESESSAPQSSQVRRLHESLDASNPTGLSDLTGDWADDHDLTYTHHDVVRQESPSFNCNISPIKGYSPPAELRPLNLMDSETERDSSASPVTSSPIKPARNIKKELPPLKMPRQPLSNDDILMRSTMMGSVHPSQSVHNLVDTSDDLEEHGNFLDSIDNEDDNEKQKIEEEMEEDEKEEEEERNKEIQEAVERGETFFKQFVFSPSVNIYVDYQGKRKITMEKAGALVGLLMAFGQLNQMPINLRKIDTRTGLLGTGRCMQHAIGEWSGDLLTNMPSVIASYGPISPLVQIGRGVVDLFLMPVAEFRKDDGNVMKGVQRGVGSFSVSSAAGIVGMAQTVTGFVQSLAEMTMKEIKPDDPSTRRVARRYNRNHGMNPTDVRHSLQLAYGILYDGYHQTRDDLELAAQEDRASGNSVVRSAFRYAVPTFLGPIVMATQVTYQLLGGLRNQLRPDTYQDERRKWGEKDVPGGVNK.

Residues 10–99 (WCKVMLQRYM…MCIEDLQLTF (90 aa)) enclose the Chorein N-terminal domain. The interval 829–1549 (DSMMKSVSAD…PNRDHSAFVV (721 aa)) is required for epg-6 binding. 4 disordered regions span residues 1678–1727 (IGSK…LGDL), 1805–1851 (DDLF…DLTG), 1898–1919 (SETERDSSASPVTSSPIKPARN), and 1967–2003 (EHGNFLDSIDNEDDNEKQKIEEEMEEDEKEEEEERNK). The span at 1681-1692 (KKTTPKTSVSSS) shows a compositional bias: low complexity. Over residues 1714 to 1723 (RPSPVQPPTP) the composition is skewed to pro residues. The segment covering 1810-1830 (QSYSSSSSETESESSAPQSSQ) has biased composition (low complexity). Residues 1972 to 2011 (LDSIDNEDDNEKQKIEEEMEEDEKEEEEERNKEIQEAVER) are a coiled coil. Residues 1988-1999 (EEMEEDEKEEEE) are compositionally biased toward acidic residues.

This sequence belongs to the ATG2 family. Interacts with epg-6; the interaction is direct.

Its subcellular location is the preautophagosomal structure membrane. The protein localises to the lipid droplet. It localises to the endoplasmic reticulum membrane. It is found in the cytoplasm. The enzyme catalyses a 1,2-diacyl-sn-glycero-3-phospho-L-serine(in) = a 1,2-diacyl-sn-glycero-3-phospho-L-serine(out). It catalyses the reaction a 1,2-diacyl-sn-glycero-3-phosphoethanolamine(in) = a 1,2-diacyl-sn-glycero-3-phosphoethanolamine(out). Functionally, lipid transfer protein involved in autophagosome assembly and in the distribution of atg-9 and atg-13 during the autophagy-mediated degradation of protein aggregates. Tethers the edge of the isolation membrane (IM) to the endoplasmic reticulum (ER) and mediates direct lipid transfer from ER to IM for IM expansion. Binds to the ER exit site (ERES), which is the membrane source for autophagosome formation, and extracts phospholipids from the membrane source to the IM for membrane expansion. Involved in autophagy-mediated degradation of ribosomal RNA and ribosomal proteins in lysosomes, which is essential for maintaining nucleotide homeostasis. In Caenorhabditis elegans, this protein is Autophagy-related protein 2.